Reading from the N-terminus, the 101-residue chain is Conantokin-L (101 aa).

The signal sequence occupies residues 1 to 21; it reads MQLYTYLYLLVPLVTFHLILG. A propeptide spanning residues 22–80 is cleaved from the precursor; sequence TGTLDHGGALTERRSTDAIALKPEPVLLQKSSARSTDDNGNDRLTQMKRILKKRGNKAR. 4-carboxyglutamate is present on residues Glu-83, Glu-84, Glu-91, and Glu-95. 2 residues coordinate a divalent metal cation: Glu-91 and Glu-95. Asn-99 is modified (asparagine amide).

Belongs to the conotoxin B superfamily. Ca(2+) serves as cofactor. It depends on Mg(2+) as a cofactor. Expressed by the venom duct.

Its subcellular location is the secreted. In terms of biological role, conantokins inhibit N-methyl-D-aspartate (NMDA) receptors. This toxin is far less potent as an anticonvulsant compound than conantokin-R. It induces sleep-like symptoms in mice. The protein is Conantokin-L of Conus lynceus (Lynceus cone).